Reading from the N-terminus, the 391-residue chain is DNA-directed RNA polymerase subunit Rpo1C (391 aa).

It belongs to the RNA polymerase beta' chain family. As to quaternary structure, part of the RNA polymerase complex.

It is found in the cytoplasm. The protein localises to the chromosome. The enzyme catalyses RNA(n) + a ribonucleoside 5'-triphosphate = RNA(n+1) + diphosphate. Functionally, DNA-dependent RNA polymerase (RNAP) catalyzes the transcription of DNA into RNA using the four ribonucleoside triphosphates as substrates. Forms part of the jaw domain. This Thermococcus kodakarensis (strain ATCC BAA-918 / JCM 12380 / KOD1) (Pyrococcus kodakaraensis (strain KOD1)) protein is DNA-directed RNA polymerase subunit Rpo1C.